Here is a 175-residue protein sequence, read N- to C-terminus: Large ribosomal subunit protein uL10 (175 aa).

Belongs to the universal ribosomal protein uL10 family. In terms of assembly, part of the ribosomal stalk of the 50S ribosomal subunit. The N-terminus interacts with L11 and the large rRNA to form the base of the stalk. The C-terminus forms an elongated spine to which L12 dimers bind in a sequential fashion forming a multimeric L10(L12)X complex.

In terms of biological role, forms part of the ribosomal stalk, playing a central role in the interaction of the ribosome with GTP-bound translation factors. The chain is Large ribosomal subunit protein uL10 from Synechococcus elongatus (strain ATCC 33912 / PCC 7942 / FACHB-805) (Anacystis nidulans R2).